A 255-amino-acid chain; its full sequence is Post-GPI attachment to proteins factor 2 (255 aa).

6 helical membrane passes run 25 to 45 (LAALSLPLGGFFFCVVWSLLF), 80 to 100 (LAIFLHLPLRLAVAKIYLEYY), 111 to 131 (LGILACFLNVVEDLALFCLSF), 143 to 163 (NAFVVFIACSECYMLMSYLLN), 185 to 205 (LFLVNVLAFGLAGYCFVRHNA), and 209 to 229 (AGVYTFFALFEYIVVLTNMGF).

The protein belongs to the PGAP2 family.

It localises to the golgi apparatus membrane. The protein resides in the endoplasmic reticulum membrane. Functionally, involved in the lipid remodeling steps of GPI-anchor maturation. Required for stable expression of GPI-anchored proteins at the cell surface. This chain is Post-GPI attachment to proteins factor 2, found in Drosophila pseudoobscura pseudoobscura (Fruit fly).